A 427-amino-acid chain; its full sequence is NADPH-dependent stearoyl-CoA 9-desaturase (427 aa).

Positions 90, 94, 125, 129, 130, 304, 308, and 309 each coordinate Fe cation.

It belongs to the fatty acid desaturase type 1 family. Interacts with the electron transfer protein Rv3230c to form a functional acyl-CoA desaturase complex. Fe(2+) is required as a cofactor. Is rapidly degraded by a mycobacterial protein degradation system that specifically targets the residues LAA at the C-terminus, leading to a post-translational proteolytic regulation of DesA3 essential activity.

The protein resides in the cell membrane. The catalysed reaction is octadecanoyl-CoA + NADPH + O2 + H(+) = (9Z)-octadecenoyl-CoA + NADP(+) + 2 H2O. It participates in lipid metabolism; fatty acid metabolism. Its function is as follows. Is likely involved in the aerobic desaturation system responsible for the synthesis of oleic acid from stearoyl-CoA; oleic acid is a precursor of mycobacterial membrane phospholipids and triglycerides. Catalyzes the conversion of stearoyl-CoA to oleoyl-CoA by introduction of a cis double bond between carbons 9 and 10 of the acyl chain. Requires the electron transfer partner Rv3230c to pass two electrons from NADPH to its active site diiron center. Is also able to catalyze the 9-desaturation of palmitoyl-CoA to palmitoleoyl-CoA. This is NADPH-dependent stearoyl-CoA 9-desaturase (desA3) from Mycobacterium tuberculosis (strain CDC 1551 / Oshkosh).